The following is a 369-amino-acid chain: Probable L-tyrosine/L-aspartate decarboxylase (369 aa).

Position 224 is an N6-(pyridoxal phosphate)lysine (Lys224).

It belongs to the group II decarboxylase family. MfnA subfamily. Pyridoxal 5'-phosphate is required as a cofactor.

The enzyme catalyses L-tyrosine + H(+) = tyramine + CO2. The catalysed reaction is L-aspartate + H(+) = beta-alanine + CO2. Its pathway is cofactor biosynthesis; methanofuran biosynthesis. The protein operates within cofactor biosynthesis; coenzyme A biosynthesis. Functionally, catalyzes the decarboxylation of L-tyrosine to produce tyramine for methanofuran biosynthesis. Can also catalyze the decarboxylation of L-aspartate to produce beta-alanine for coenzyme A (CoA) biosynthesis. The protein is Probable L-tyrosine/L-aspartate decarboxylase of Methanospirillum hungatei JF-1 (strain ATCC 27890 / DSM 864 / NBRC 100397 / JF-1).